An 852-amino-acid chain; its full sequence is Protein Shroom1 (852 aa).

Position 1 is an N-acetylmethionine (methionine 1). Serine 18 bears the Phosphoserine mark. 3 disordered regions span residues 34 to 54 (SSFSAASGGPEPRTQSPGTDL), 81 to 109 (TSPRPRPAVAARSGPQPTEVPGTPGPLNR), and 125 to 218 (AAQA…ANQQ). Threonine 103 bears the Phosphothreonine mark. The span at 125-144 (AAQAAEPPSPPASRAAYRQR) shows a compositional bias: low complexity. Serine 133 and serine 137 each carry phosphoserine. In terms of domain architecture, ASD1 spans 145–233 (LQGAQRRVLR…SEPGKLDRVG (89 aa)). The segment covering 152–164 (VLRETSFQRKELR) has biased composition (basic and acidic residues). Serine 166, serine 190, and serine 224 each carry phosphoserine. 4 disordered regions span residues 276 to 320 (LPET…GSGG), 399 to 431 (MRSPPDPHASQGPPASVHASDQPYGTGLGQRTG), 464 to 496 (SRPTSHTPTGTANDNIPTIDPTGLTTNPPTAAE), and 823 to 852 (DLGHHAPSPSPARPPGTCPPVQPPFPLLLT). Over residues 279-289 (TQPQGSMNLDS) the composition is skewed to polar residues. A compositionally biased stretch (low complexity) spans 301–313 (ASRSRSASGEVLG). Residues 465–479 (RPTSHTPTGTANDNI) are compositionally biased toward polar residues. Residues 543–825 (EELVQELARL…QLDAIRDDLG (283 aa)) enclose the ASD2 domain. Positions 830–852 (SPSPARPPGTCPPVQPPFPLLLT) are enriched in pro residues.

Belongs to the shroom family. As to quaternary structure, interacts with F-actin.

Its subcellular location is the cytoplasm. The protein localises to the cytoskeleton. Functionally, may be involved in the assembly of microtubule arrays during cell elongation. In Homo sapiens (Human), this protein is Protein Shroom1 (SHROOM1).